Reading from the N-terminus, the 321-residue chain is Ribosomal RNA small subunit methyltransferase H (321 aa).

Residues Gly-42 to His-44, Asp-62, Phe-86, Asp-107, and Gln-114 contribute to the S-adenosyl-L-methionine site.

It belongs to the methyltransferase superfamily. RsmH family.

Its subcellular location is the cytoplasm. The enzyme catalyses cytidine(1402) in 16S rRNA + S-adenosyl-L-methionine = N(4)-methylcytidine(1402) in 16S rRNA + S-adenosyl-L-homocysteine + H(+). Specifically methylates the N4 position of cytidine in position 1402 (C1402) of 16S rRNA. The chain is Ribosomal RNA small subunit methyltransferase H from Herminiimonas arsenicoxydans.